A 309-amino-acid chain; its full sequence is Porphobilinogen deaminase (309 aa).

Cys-244 is subject to S-(dipyrrolylmethanemethyl)cysteine.

The protein belongs to the HMBS family. In terms of assembly, monomer. Dipyrromethane is required as a cofactor.

It catalyses the reaction 4 porphobilinogen + H2O = hydroxymethylbilane + 4 NH4(+). It participates in porphyrin-containing compound metabolism; protoporphyrin-IX biosynthesis; coproporphyrinogen-III from 5-aminolevulinate: step 2/4. Its function is as follows. Tetrapolymerization of the monopyrrole PBG into the hydroxymethylbilane pre-uroporphyrinogen in several discrete steps. The sequence is that of Porphobilinogen deaminase from Listeria monocytogenes serotype 4a (strain HCC23).